The primary structure comprises 435 residues: Asparagine--tRNA ligase (435 aa).

Belongs to the class-II aminoacyl-tRNA synthetase family. Homodimer.

It localises to the cytoplasm. It catalyses the reaction tRNA(Asn) + L-asparagine + ATP = L-asparaginyl-tRNA(Asn) + AMP + diphosphate + H(+). The sequence is that of Asparagine--tRNA ligase from Leptospira borgpetersenii serovar Hardjo-bovis (strain JB197).